The primary structure comprises 317 residues: Melanocyte-stimulating hormone receptor (317 aa).

The Extracellular segment spans residues M1–E37. N29 is a glycosylation site (N-linked (GlcNAc...) asparagine). The chain crosses the membrane as a helical span at residues V38–I63. At A64–P72 the chain is on the cytoplasmic side. The chain crosses the membrane as a helical span at residues M73–L93. Over E94–N118 the chain is Extracellular. A helical membrane pass occupies residues T119 to V140. Over D141 to R163 the chain is Cytoplasmic. The chain crosses the membrane as a helical span at residues A164–C183. Topologically, residues D184–C191 are extracellular. The helical transmembrane segment at L192 to L211 threads the bilayer. At A212–A240 the chain is on the cytoplasmic side. Residues A241 to L266 form a helical membrane-spanning segment. The Extracellular portion of the chain corresponds to C267–N279. A helical membrane pass occupies residues F280 to F300. Topologically, residues R301 to W317 are cytoplasmic. C315 is lipidated: S-palmitoyl cysteine.

It belongs to the G-protein coupled receptor 1 family. As to quaternary structure, interacts with MGRN1, but does not undergo MGRN1-mediated ubiquitination; this interaction competes with GNAS-binding and thus inhibits agonist-induced cAMP production. Interacts with OPN3; the interaction results in a decrease in MC1R-mediated cAMP signaling and ultimately a decrease in melanin production in melanocytes.

It is found in the cell membrane. Its function is as follows. Receptor for MSH (alpha, beta and gamma) and ACTH. The activity of this receptor is mediated by G proteins which activate adenylate cyclase. Mediates melanogenesis, the production of eumelanin (black/brown) and phaeomelanin (red/yellow), via regulation of cAMP signaling in melanocytes. The sequence is that of Melanocyte-stimulating hormone receptor (MC1R) from Ateles paniscus (Black spider monkey).